Reading from the N-terminus, the 207-residue chain is MAPGEPFSQRRIGLTGGIASGKSSVGRWLAQQGLPVLDADQFAREALAPGHPATNSVMQRYGSTVRAEATEAIDRAALGRIVFHDPAERRWLEHLIHPIVRERFDQALSLHADTPAVVLMIPLLFEAGLESLCSEIWLVDCDESQQLERLIARDGLSPKAAQARIAAQWPLNQKRGLADHVVANQGHPGAWQPQARELLKMSPTAEL.

The region spanning 11–207 (RIGLTGGIAS…LLKMSPTAEL (197 aa)) is the DPCK domain. 19–24 (ASGKSS) is an ATP binding site.

Belongs to the CoaE family.

It is found in the cytoplasm. It carries out the reaction 3'-dephospho-CoA + ATP = ADP + CoA + H(+). It participates in cofactor biosynthesis; coenzyme A biosynthesis; CoA from (R)-pantothenate: step 5/5. In terms of biological role, catalyzes the phosphorylation of the 3'-hydroxyl group of dephosphocoenzyme A to form coenzyme A. This Synechococcus sp. (strain CC9605) protein is Dephospho-CoA kinase.